Reading from the N-terminus, the 708-residue chain is Lactotransferrin (708 aa).

A signal peptide spans 1–19 (MKLFFPALLSLGALGLCLA). Transferrin-like domains follow at residues 25 to 352 (VRWC…GLRE) and 364 to 693 (VVWC…KLRR). 2 disulfide bridges follow: Cys-28-Cys-64 and Cys-38-Cys-55. The tract at residues 44–51 (RMKKVRGP) is interaction with E.coli ompC. Position 79 (Asp-79) interacts with Fe(3+). The active site involves Lys-92. Tyr-111 is a Fe(3+) binding site. 5 disulfide bridges follow: Cys-134–Cys-217, Cys-176–Cys-192, Cys-179–Cys-202, Cys-189–Cys-200, and Cys-250–Cys-264. 4 residues coordinate hydrogencarbonate: Thr-136, Arg-140, Ala-142, and Gly-143. A Fe(3+)-binding site is contributed by Tyr-211. A glycan (N-linked (GlcNAc...) asparagine) is linked at Asn-252. His-272 provides a ligand contact to Fe(3+). Catalysis depends on Ser-278, which acts as the Nucleophile. Disulfide bonds link Cys-367–Cys-399 and Cys-377–Cys-390. An N-linked (GlcNAc...) asparagine glycan is attached at Asn-385. The Fe(3+) site is built by Asp-414 and Tyr-452. 8 disulfide bridges follow: Cys-424–Cys-703, Cys-444–Cys-666, Cys-476–Cys-551, Cys-500–Cys-694, Cys-510–Cys-524, Cys-521–Cys-534, Cys-592–Cys-606, and Cys-644–Cys-649. 4 residues coordinate hydrogencarbonate: Thr-478, Arg-482, Ala-484, and Gly-485. Asn-537 carries an N-linked (GlcNAc...) asparagine glycan. Position 545 (Tyr-545) interacts with Fe(3+). The N-linked (GlcNAc...) asparagine glycan is linked to Asn-594. His-614 provides a ligand contact to Fe(3+).

The protein belongs to the transferrin family. In terms of assembly, monomer. Found in a complex with LTF, CLU, EPPIN and SEMG1. Interacts with E.coli outer membrane protein C (OmpC). Found in a complex with MPO and LTF; interacts directly with CP, allows Fe(3+) incorporation into LTF and activation of CP ferroxidase activity. In terms of processing, poly-N-acetyllactosaminic carbohydrate moiety seems to be needed for TLR4 activation.

It localises to the secreted. It is found in the cytoplasmic granule. Functionally, transferrins are iron binding transport proteins which can bind two Fe(3+) ions in association with the binding of an anion, usually bicarbonate. Major iron-binding and multifunctional protein found in exocrine fluids such as breast milk and mucosal secretions. Has antimicrobial activity, which depends on the extracellular cation concentration. Antimicrobial properties include bacteriostasis, which is related to its ability to sequester free iron and thus inhibit microbial growth, as well as direct bactericidal properties leading to the release of lipopolysaccharides from the bacterial outer membrane. Can also prevent bacterial biofilm development in P.aeruginosa infection. Has weak antifungal activity against C.albicans. Has anabolic, differentiating and anti-apoptotic effects on osteoblasts and can also inhibit osteoclastogenesis, possibly playing a role in the regulation of bone growth. Promotes binding of species C adenoviruses to epithelial cells, promoting adenovirus infection. Can inhibit papillomavirus infections. Stimulates the TLR4 signaling pathway leading to NF-kappa-B activation and subsequent pro-inflammatory cytokine production while also interfering with the lipopolysaccharide (LPS)-stimulated TLR4 signaling. Inhibits neutrophil granulocyte migration to sites of apoptosis, when secreted by apoptotic cells. Stimulates VEGFA-mediated endothelial cell migration and proliferation. Binds heparin, chondroitin sulfate and possibly other glycosaminoglycans (GAGs). Also binds specifically to pneumococcal surface protein A (PspA), the lipid A portion of bacterial lipopolysaccharide (LPS), lysozyme and DNA. In terms of biological role, lactoferricin binds to the bacterial surface and is crucial for the bactericidal functions. Has some antiviral activity against papillomavirus infection. N-terminal region shows strong antifungal activity against C.albicans. Contains two BBXB heparin-binding consensus sequences that appear to form the predominate functional GAG-binding site. Its function is as follows. The lactotransferrin transferrin-like domain 1 functions as a serine protease of the peptidase S60 family that cuts arginine rich regions. This function contributes to the antimicrobial activity. Shows a preferential cleavage at -Arg-Ser-Arg-Arg-|- and -Arg-Arg-Ser-Arg-|-, and of Z-Phe-Arg-|-aminomethylcoumarin sites. This is Lactotransferrin (LTF) from Camelus dromedarius (Dromedary).